A 106-amino-acid polypeptide reads, in one-letter code: Putative double-stranded DNA mimic protein PM0536 (106 aa).

It belongs to the putative dsDNA mimic protein family.

May act as a double-stranded DNA (dsDNA) mimic. Probably regulates the activity of a dsDNA-binding protein. This is Putative double-stranded DNA mimic protein PM0536 from Pasteurella multocida (strain Pm70).